A 243-amino-acid chain; its full sequence is UPF0246 protein MGAS9429_Spy1799 (243 aa).

This sequence belongs to the UPF0246 family.

The protein is UPF0246 protein MGAS9429_Spy1799 of Streptococcus pyogenes serotype M12 (strain MGAS9429).